The primary structure comprises 533 residues: MKPRSGLEEAQRRQASDIRVFASSCTMHGLGHIFGPGGLTLRRGLWATAVLLSLAAFLYQVAERVRYYGEFHHKTTLDERESHQLTFPAVTLCNINPLRRSRLTPNDLHWAGTALLGLDPAEHAAYLRALGQPPAPPGFMPSPTFDMAQLYARAGHSLEDMLLDCRYRGQPCGPENFTVIFTRMGQCYTFNSGAHGAELLTTPKGGAGNGLEIMLDVQQEEYLPIWKDMEETPFEVGIRVQIHSQDEPPAIDQLGFGAAPGHQTFVSCQQQQLSFLPPPWGDCNTASLDPDDFDPEPSDPLGSPRPRPSPPYSLIGCRLACESRYVARKCGCRMMHMPGNSPVCSPQQYKDCASPALDAMLRKDTCVCPNPCATTRYAKELSMVRIPSRASARYLARKYNRSESYITENVLVLDIFFEALNYEAVEQKAAYEVSELLGDIGGQMGLFIGASLLTILEILDYLCEVFQDRVLGYFWNRRSAQKRSGNTLLQEELNGHRTHVPHLSLGPRPPTTPCAVTKTLSASHRTCYLVTRL.

Topologically, residues 1–19 (MKPRSGLEEAQRRQASDIR) are cytoplasmic. Residues 20–40 (VFASSCTMHGLGHIFGPGGLT) traverse the membrane as a helical segment. Phosphothreonine; by PKC is present on threonine 40. The Extracellular segment spans residues 41–435 (LRRGLWATAV…EQKAAYEVSE (395 aa)). 7 cysteine pairs are disulfide-bonded: cysteine 93–cysteine 187, cysteine 165–cysteine 172, cysteine 283–cysteine 372, cysteine 317–cysteine 368, cysteine 321–cysteine 366, cysteine 330–cysteine 352, and cysteine 332–cysteine 344. Asparagine 176 is a glycosylation site (N-linked (GlcNAc...) asparagine). The tract at residues 286–310 (ASLDPDDFDPEPSDPLGSPRPRPSP) is disordered. Asparagine 400 is a glycosylation site (N-linked (GlcNAc...) asparagine). A helical transmembrane segment spans residues 436-456 (LLGDIGGQMGLFIGASLLTIL). Residues 449-451 (GAS) carry the GAS motif; ion selectivity filter motif. The Cytoplasmic segment spans residues 457–533 (EILDYLCEVF…HRTCYLVTRL (77 aa)). At serine 523 the chain carries Phosphoserine; by PKC. Positions 530-533 (VTRL) match the PDZ-binding motif.

This sequence belongs to the amiloride-sensitive sodium channel (TC 1.A.6) family. ASIC3 subfamily. In terms of assembly, can form homotrimeric channels. Heterotrimer; forms functional heterotrimers producing channel with different properties. Forms heterotrimers with ASIC2; gives rise to a biphasic current with a sustained current which discriminates poorly between Na(+) and K(+). Interacts with STOM; inhibits ASIC3 acid-evoked current. Interacts with LIN7B (via PDZ domain); increases ASIC3 expression at the plasma membrane. Interacts with MAGI1 (via PDZ domain); probably regulates ASIC3. Interacts with GOPC (via PDZ domain); probably regulates ASIC3. Interacts with DLG4 (via PDZ domain); reduces ASIC3 expression at the plasma membrane. In terms of processing, could be phosphorylated by PKC, promoting activation of ASIC2/ASIC3 heterotrimers. Expressed in sciatic nerve and dorsal root ganglion (at protein level). Expressed in sensory neurons of dorsal root ganglion. Expressed in Golgi interneurons in the granular layer. Also found in superior cervical ganglia, spinal cord and brain stem.

It is found in the cell membrane. The protein localises to the cytoplasm. It carries out the reaction Na(+)(in) = Na(+)(out). The enzyme catalyses K(+)(in) = K(+)(out). The catalysed reaction is Ca(2+)(in) = Ca(2+)(out). Inhibited by the diuretic drug amiloride. Inhibited by gadolinium ions. Inhibited by extracellular Ca(2+). Activated by lactate. Salicylic acid, diclofenac and aspirin inhibit the sustained current component. Activated by the vertebrate neuropeptides NPFF and NPSF, and the related FMRFamide. Specifically and reversibly inhibited by the a sea anemone toxin APETx2. ASIC3-containing channels are potentiated by the cono-RFamide CNF-Tx1.1, and probably CNF-Tx1.2 and CNF-Tx1.3 (AC P0DL71). In terms of biological role, forms pH-gated heterotrimeric sodium channels that act as postsynaptic excitatory receptors in the nervous system. Upon extracellular acidification, these channels generate a biphasic current with a fast inactivating and a slow sustained phase. ASIC3 is more sensitive to protons and gates between closed, open, and desensitized states faster than other ASICs. Displays high selectivity for sodium ions but can also permit the permeation of other cations. As a neuronal acid sensor, probably contributes to mechanoreception, acid nociception, and heat nociception. By forming heterotrimeric channels with ASIC2, generates a biphasic current with a fast inactivating and a slow sustained phase, which in sensory neurons is proposed to mediate the pain induced by acidosis that occurs in ischemic, damaged or inflamed tissues. The chain is Acid-sensing ion channel 3 from Rattus norvegicus (Rat).